We begin with the raw amino-acid sequence, 261 residues long: Carnitinyl-CoA dehydratase (261 aa).

E111 serves as the catalytic Nucleophile. E131 serves as the catalytic Proton acceptor.

The protein belongs to the enoyl-CoA hydratase/isomerase family.

It catalyses the reaction (R)-carnitinyl-CoA = crotonobetainyl-CoA + H2O. It participates in amine and polyamine metabolism; carnitine metabolism. Catalyzes the reversible dehydration of L-carnitinyl-CoA to crotonobetainyl-CoA. This Salmonella dublin (strain CT_02021853) protein is Carnitinyl-CoA dehydratase.